Consider the following 450-residue polypeptide: tRNA-2-methylthio-N(6)-dimethylallyladenosine synthase (450 aa).

The MTTase N-terminal domain maps to 14–132; the sequence is GEFFIETWGC…FPNYLNEVKK (119 aa). Residues C23, C59, C93, C169, C173, and C176 each contribute to the [4Fe-4S] cluster site. The Radical SAM core domain maps to 155 to 385; it reads RKNSMKAFVT…VEVVNEISAK (231 aa). One can recognise a TRAM domain in the interval 388 to 450; that stretch reads KAYEGKIEEV…NSFSLTGEEI (63 aa).

This sequence belongs to the methylthiotransferase family. MiaB subfamily. Monomer. [4Fe-4S] cluster is required as a cofactor.

It is found in the cytoplasm. The enzyme catalyses N(6)-dimethylallyladenosine(37) in tRNA + (sulfur carrier)-SH + AH2 + 2 S-adenosyl-L-methionine = 2-methylsulfanyl-N(6)-dimethylallyladenosine(37) in tRNA + (sulfur carrier)-H + 5'-deoxyadenosine + L-methionine + A + S-adenosyl-L-homocysteine + 2 H(+). Functionally, catalyzes the methylthiolation of N6-(dimethylallyl)adenosine (i(6)A), leading to the formation of 2-methylthio-N6-(dimethylallyl)adenosine (ms(2)i(6)A) at position 37 in tRNAs that read codons beginning with uridine. The polypeptide is tRNA-2-methylthio-N(6)-dimethylallyladenosine synthase (Clostridium botulinum (strain Okra / Type B1)).